The primary structure comprises 509 residues: Maturase K (509 aa).

The protein belongs to the intron maturase 2 family. MatK subfamily.

Its subcellular location is the plastid. The protein localises to the chloroplast. Its function is as follows. Usually encoded in the trnK tRNA gene intron. Probably assists in splicing its own and other chloroplast group II introns. In Nicotiana rustica (Aztec tobacco), this protein is Maturase K.